Reading from the N-terminus, the 125-residue chain is NADPH-dependent 7-cyano-7-deazaguanine reductase (125 aa).

Cysteine 41 acts as the Thioimide intermediate in catalysis. Catalysis depends on aspartate 48, which acts as the Proton donor. Residues 63-65 (VEL) and 82-83 (HE) each bind substrate.

Belongs to the GTP cyclohydrolase I family. QueF type 1 subfamily.

Its subcellular location is the cytoplasm. It catalyses the reaction 7-aminomethyl-7-carbaguanine + 2 NADP(+) = 7-cyano-7-deazaguanine + 2 NADPH + 3 H(+). It functions in the pathway tRNA modification; tRNA-queuosine biosynthesis. Catalyzes the NADPH-dependent reduction of 7-cyano-7-deazaguanine (preQ0) to 7-aminomethyl-7-deazaguanine (preQ1). The sequence is that of NADPH-dependent 7-cyano-7-deazaguanine reductase from Sulfurimonas denitrificans (strain ATCC 33889 / DSM 1251) (Thiomicrospira denitrificans (strain ATCC 33889 / DSM 1251)).